A 60-amino-acid chain; its full sequence is Large ribosomal subunit protein bL32 (60 aa).

The interval 1-27 is disordered; the sequence is MAVPRNRLSNARKNSKRAHHAKKPKSL. A compositionally biased stretch (basic residues) spans 13 to 25; it reads KNSKRAHHAKKPK.

It belongs to the bacterial ribosomal protein bL32 family.

The sequence is that of Large ribosomal subunit protein bL32 from Protochlamydia amoebophila (strain UWE25).